Consider the following 193-residue polypeptide: Ion-translocating oxidoreductase complex subunit A (193 aa).

Transmembrane regions (helical) follow at residues 5 to 25 (LLLFVGTVLVNNFVLVKFLGL), 39 to 59 (IGMGLATTFVLTLASVCAWMV), 62 to 82 (FILLPLGLIYLRTLAFILVIA), 102 to 122 (LLGIFLPLITTNCAVLGVALL), 134 to 154 (AVYGFSAAAGFSLVMVLFAAI), and 171 to 191 (SIALITAGLMSLAFMGFTGLV).

It belongs to the NqrDE/RnfAE family. As to quaternary structure, the complex is composed of six subunits: RnfA, RnfB, RnfC, RnfD, RnfE and RnfG.

It localises to the cell inner membrane. Functionally, part of a membrane-bound complex that couples electron transfer with translocation of ions across the membrane. The polypeptide is Ion-translocating oxidoreductase complex subunit A (Yersinia pestis bv. Antiqua (strain Nepal516)).